The primary structure comprises 132 residues: Prefoldin subunit alpha (132 aa).

It belongs to the prefoldin subunit alpha family. In terms of assembly, heterohexamer of two alpha and four beta subunits.

It is found in the cytoplasm. Molecular chaperone capable of stabilizing a range of proteins. Seems to fulfill an ATP-independent, HSP70-like function in archaeal de novo protein folding. The chain is Prefoldin subunit alpha from Pyrobaculum islandicum (strain DSM 4184 / JCM 9189 / GEO3).